Consider the following 182-residue polypeptide: MSDNLSLHGTTILCLKKNEEIIIAADGQVSHGNTVLKSTARKLRTIANNKIIAGFAGSTADGLALFEKLAVKIEQHKHNLLRSAVELAKDWRSDKYLRRLEAMMIVADRSHILILTGNGDVVEPEKNVAAIGSGGLFALSAARALMSYENNLTAEEIALKSMNIAADLCVFSNHNIIMEKVV.

The active site involves threonine 10. Na(+) contacts are provided by alanine 166, cysteine 169, and serine 172.

This sequence belongs to the peptidase T1B family. HslV subfamily. As to quaternary structure, a double ring-shaped homohexamer of HslV is capped on each side by a ring-shaped HslU homohexamer. The assembly of the HslU/HslV complex is dependent on binding of ATP.

The protein localises to the cytoplasm. It catalyses the reaction ATP-dependent cleavage of peptide bonds with broad specificity.. With respect to regulation, allosterically activated by HslU binding. Protease subunit of a proteasome-like degradation complex believed to be a general protein degrading machinery. The chain is ATP-dependent protease subunit HslV from Rickettsia peacockii (strain Rustic).